The sequence spans 281 residues: Phosphatidylglycerol--prolipoprotein diacylglyceryl transferase (281 aa).

Transmembrane regions (helical) follow at residues 23–43, 71–91, 107–127, and 133–153; these read VGPL…LFAW, FVIW…VLFY, WDGG…MILF, and ILVW…LGVV. Residue arginine 154 coordinates a 1,2-diacyl-sn-glycero-3-phospho-(1'-sn-glycerol). 3 consecutive transmembrane segments (helical) span residues 189–209, 217–237, and 247–267; these read LYEA…LVWG, GFVA…VEFF, and LFGG…LLGL.

This sequence belongs to the Lgt family.

It is found in the cell inner membrane. The enzyme catalyses L-cysteinyl-[prolipoprotein] + a 1,2-diacyl-sn-glycero-3-phospho-(1'-sn-glycerol) = an S-1,2-diacyl-sn-glyceryl-L-cysteinyl-[prolipoprotein] + sn-glycerol 1-phosphate + H(+). The protein operates within protein modification; lipoprotein biosynthesis (diacylglyceryl transfer). Catalyzes the transfer of the diacylglyceryl group from phosphatidylglycerol to the sulfhydryl group of the N-terminal cysteine of a prolipoprotein, the first step in the formation of mature lipoproteins. The sequence is that of Phosphatidylglycerol--prolipoprotein diacylglyceryl transferase from Brucella abortus (strain S19).